We begin with the raw amino-acid sequence, 288 residues long: Bifunctional protein FolD (288 aa).

NADP(+) is bound by residues 166–168 (GRS), S191, and V232.

Belongs to the tetrahydrofolate dehydrogenase/cyclohydrolase family. As to quaternary structure, homodimer.

It catalyses the reaction (6R)-5,10-methylene-5,6,7,8-tetrahydrofolate + NADP(+) = (6R)-5,10-methenyltetrahydrofolate + NADPH. It carries out the reaction (6R)-5,10-methenyltetrahydrofolate + H2O = (6R)-10-formyltetrahydrofolate + H(+). The protein operates within one-carbon metabolism; tetrahydrofolate interconversion. Catalyzes the oxidation of 5,10-methylenetetrahydrofolate to 5,10-methenyltetrahydrofolate and then the hydrolysis of 5,10-methenyltetrahydrofolate to 10-formyltetrahydrofolate. This Roseiflexus sp. (strain RS-1) protein is Bifunctional protein FolD.